The following is a 492-amino-acid chain: MSLIVLGTASHVGKSMTVAALCRALYRRGIPVAPFKSQNMSLNSYVTVDGSEIGIAQAVQAFAAGIEPEADMNPILLKPKGDSVSQVVLLGRPYKDVQIRDYYRETDTLLAEAVSAFERLRSRFGNVVVEGAGGAAEVNLYDRDIANIRLARSLRLPIVLVADIERGGVFAQVYGTLALLPEDIRPLVAGIIVNKFRGDPGLFAPGVAKLEELTGVPVLGVVPFADIPLPSEDSLSIADKRDRKTGTPVRIAVVRLPRISNFTDFELLEEHVAVDYVPPGGTLSGYDCIILPGTKNTVEDLAALNRHGVGEELRLARERGVPIIGICGGYQMLGRRIVDAGIESENPAEYAGFGLLDVVTAFTGYRKTTVQVRRRATGPGPILPAMGEVDGYEIHMGETERGDLSEAFAGEGASTPDGLVFGTYMHGLFQNPGAANALLAYLAKRRGVAFEPVTAESTALGAAASYDDLARHFEEHVDMDAIMKYFIDRRSE.

The 187-residue stretch at 248-434 (PVRIAVVRLP…MHGLFQNPGA (187 aa)) folds into the GATase cobBQ-type domain. Cys-327 serves as the catalytic Nucleophile. Residue His-426 is part of the active site.

It belongs to the CobB/CobQ family. CobQ subfamily.

The protein operates within cofactor biosynthesis; adenosylcobalamin biosynthesis. Its function is as follows. Catalyzes amidations at positions B, D, E, and G on adenosylcobyrinic A,C-diamide. NH(2) groups are provided by glutamine, and one molecule of ATP is hydrogenolyzed for each amidation. The sequence is that of Probable cobyric acid synthase from Methanoculleus marisnigri (strain ATCC 35101 / DSM 1498 / JR1).